Here is a 551-residue protein sequence, read N- to C-terminus: uncharacterized protein (551 aa).

The protein belongs to the GSP E family.

This is an uncharacterized protein from Methanocaldococcus jannaschii (strain ATCC 43067 / DSM 2661 / JAL-1 / JCM 10045 / NBRC 100440) (Methanococcus jannaschii).